The primary structure comprises 419 residues: CinA-like protein (419 aa).

The protein belongs to the CinA family.

This chain is CinA-like protein, found in Parasynechococcus marenigrum (strain WH8102).